Here is a 523-residue protein sequence, read N- to C-terminus: Peptidyl-prolyl cis-trans isomerase 4 (523 aa).

The U-box domain maps to 38–111; sequence KRLPINHCSL…GKFRCPVTFR (74 aa). Residues 278–433 form the PPIase cyclophilin-type domain; it reads KNAFVRLVTN…VSVVIMRAEV (156 aa).

Belongs to the cyclophilin-type PPIase family. PPIL2 subfamily. In terms of assembly, interacts with mep-1. Exclusively in the larval body wall striated muscle cells.

The protein resides in the nucleus. It carries out the reaction [protein]-peptidylproline (omega=180) = [protein]-peptidylproline (omega=0). The enzyme catalyses S-ubiquitinyl-[E2 ubiquitin-conjugating enzyme]-L-cysteine + [acceptor protein]-L-lysine = [E2 ubiquitin-conjugating enzyme]-L-cysteine + N(6)-ubiquitinyl-[acceptor protein]-L-lysine.. It participates in protein modification; protein ubiquitination. May catalyze the cis-trans isomerization of proline imidic peptide bonds in oligopeptides thereby assisting the folding of proteins. May also function as a chaperone, playing a role in intracellular transport of proteins. May also have a protein ubiquitin ligase activity acting as an E3 ubiquitin protein ligase or as a ubiquitin-ubiquitin ligase promoting elongation of ubiquitin chains on proteins. Influences the hermaphrodite switch from spermatogenesis to oogenesis. Required for body wall muscle cell development. The polypeptide is Peptidyl-prolyl cis-trans isomerase 4 (cyn-4) (Caenorhabditis elegans).